A 168-amino-acid chain; its full sequence is MKRLKAYLKDGINVAAVMCLGDTISQFFFDKKSLDEWDAGRTLRFGIVGLVFVGPTLRRWYHFLESRVPKTYSPMRRGVTKMLVDQTLFAPPFTMAMSFLVPLSNGEPIDRIRQRILDSYLSILVRNYMLWPAAQMLNFRFVPLGYQVLYAQFIALVWNCYLSMILNS.

A run of 4 helical transmembrane segments spans residues 12-29, 41-61, 82-101, and 144-166; these read INVA…QFFF, RTLR…RRWY, MLVD…SFLV, and LGYQ…SMIL.

Belongs to the peroxisomal membrane protein PXMP2/4 family. As to quaternary structure, part of a larger complex that may be a homohexamer.

It is found in the mitochondrion inner membrane. Functionally, non-selective channel that modulates the membrane potential under normal conditions and oxidative stress, and is involved in mitochondrial homeostasis. Can translocate uridine, but not orotate, across a lipid membrane. Involved in maintenance of mitochondrial ultrastructure. May be involved in mitochondrial DNA (mtDNA) maintenance but does not appear to be directly involved in mitochondrial deoxynucleoside triphosphate (dNTP) pool homeostasis. May be involved in the regulation of reactive oxygen species metabolism and the control of oxidative phosphorylation. This is Mitochondrial inner membrane protein Mpv17 from Drosophila melanogaster (Fruit fly).